Consider the following 472-residue polypeptide: MPRTLFDKIWDTHIVRPQTAETPAVLYIDLHLIHEVTSPQAFTELRRRGLKVRRPDRTLATMDHSTPTTPRGPDGIIPVVDAQAAAQLRQLEQNCADFGIPLFALGSERQGIVHVIGPEQGLTQPGMTIVCGDSHTSTHGAFGALAFGIGTSEVAHVLATQCLIQNRPKTMEVRVDGRLKPGVTAKDIILAIIARYGVGAGVGHVFEYTGEAIRALSMEERMTICNMSIEGGARAGMIAPDDTTFQYIAGRPFAPKGAAWDEAVAYWRTLPTDDGAVYDRTITLDASQLTPMITYGTNPGMGIPIDGRIPTPEELPDQAARQALDKALRYMDLRPGQPLLGQKVDVVFLGSCTNSRISDLRMAASVLKGRKIAEGVRMMVVPGSQQVKKQAEAEGLDRIFREAGAEWREAGCSACLGMNDDKVPPGKYAVSTSNRNFEGRQGPGARTLLASPLTAVASAIEGVVADPRKYVG.

Residues Cys352, Cys412, and Cys415 each coordinate [4Fe-4S] cluster.

This sequence belongs to the aconitase/IPM isomerase family. LeuC type 1 subfamily. In terms of assembly, heterodimer of LeuC and LeuD. [4Fe-4S] cluster is required as a cofactor.

The enzyme catalyses (2R,3S)-3-isopropylmalate = (2S)-2-isopropylmalate. It functions in the pathway amino-acid biosynthesis; L-leucine biosynthesis; L-leucine from 3-methyl-2-oxobutanoate: step 2/4. Functionally, catalyzes the isomerization between 2-isopropylmalate and 3-isopropylmalate, via the formation of 2-isopropylmaleate. The chain is 3-isopropylmalate dehydratase large subunit from Roseiflexus castenholzii (strain DSM 13941 / HLO8).